A 312-amino-acid polypeptide reads, in one-letter code: Ribose-phosphate pyrophosphokinase (312 aa).

ATP-binding positions include 34–36 and 93–94; these read DLE and RQ. 2 residues coordinate Mg(2+): H127 and D168. The active site involves K192. Residues R194, D218, and 222-226 contribute to the D-ribose 5-phosphate site; that span reads DSAGT.

The protein belongs to the ribose-phosphate pyrophosphokinase family. Class I subfamily. In terms of assembly, homohexamer. Requires Mg(2+) as cofactor.

It localises to the cytoplasm. The catalysed reaction is D-ribose 5-phosphate + ATP = 5-phospho-alpha-D-ribose 1-diphosphate + AMP + H(+). Its pathway is metabolic intermediate biosynthesis; 5-phospho-alpha-D-ribose 1-diphosphate biosynthesis; 5-phospho-alpha-D-ribose 1-diphosphate from D-ribose 5-phosphate (route I): step 1/1. Its function is as follows. Involved in the biosynthesis of the central metabolite phospho-alpha-D-ribosyl-1-pyrophosphate (PRPP) via the transfer of pyrophosphoryl group from ATP to 1-hydroxyl of ribose-5-phosphate (Rib-5-P). The chain is Ribose-phosphate pyrophosphokinase from Caulobacter vibrioides (strain ATCC 19089 / CIP 103742 / CB 15) (Caulobacter crescentus).